Reading from the N-terminus, the 215-residue chain is Nucleoredoxin-like protein 1 (215 aa).

One can recognise a Thioredoxin; atypical domain in the interval 1-165 (MADLFLDKIL…VSEIIDRSFL (165 aa)). Residues 185–194 (IKYKDETTNE) show a composition bias toward basic and acidic residues. Residues 185–215 (IKYKDETTNEKKKRKHCDDEDEGGGGGTEFF) form a disordered region.

Belongs to the nucleoredoxin family.

Its subcellular location is the cell projection. It localises to the cilium. The protein localises to the photoreceptor outer segment. In terms of biological role, plays an important role in retinal cone photoreceptor survival. May play a role in cone cell viability, slowing down cone degeneration, does not seem to play a role in degenerating rods. This is Nucleoredoxin-like protein 1 (nxnl1) from Xenopus laevis (African clawed frog).